The primary structure comprises 65 residues: Large ribosomal subunit protein bL35 (65 aa).

It belongs to the bacterial ribosomal protein bL35 family.

The sequence is that of Large ribosomal subunit protein bL35 from Alkalilimnicola ehrlichii (strain ATCC BAA-1101 / DSM 17681 / MLHE-1).